Here is a 436-residue protein sequence, read N- to C-terminus: GTPase Der (436 aa).

EngA-type G domains lie at 4–167 and 175–351; these read PTVA…PVEE and IRFS…ESQN. Residues 10 to 17, 57 to 61, 119 to 122, 181 to 188, 229 to 233, and 294 to 297 contribute to the GTP site; these read GRPNVGKS, DTGGI, NKVD, DTAGM, and NKWD. A KH-like domain is found at 352 to 436; it reads KRIPSAVLND…PIHLIARKRK (85 aa).

This sequence belongs to the TRAFAC class TrmE-Era-EngA-EngB-Septin-like GTPase superfamily. EngA (Der) GTPase family. In terms of assembly, associates with the 50S ribosomal subunit.

Its function is as follows. GTPase that plays an essential role in the late steps of ribosome biogenesis. This Streptococcus pyogenes serotype M2 (strain MGAS10270) protein is GTPase Der.